The sequence spans 243 residues: Probable transcriptional regulatory protein LSEI_1022 (243 aa).

The disordered stretch occupies residues 1–23 (MSGHSKWHNIQGRKNAQDSKRGK).

It belongs to the TACO1 family.

It localises to the cytoplasm. This chain is Probable transcriptional regulatory protein LSEI_1022, found in Lacticaseibacillus paracasei (strain ATCC 334 / BCRC 17002 / CCUG 31169 / CIP 107868 / KCTC 3260 / NRRL B-441) (Lactobacillus paracasei).